Here is a 325-residue protein sequence, read N- to C-terminus: Probable cell division protein WhiA (325 aa).

The segment at residues 273 to 306 (SLEELGALADPPLTKDAVAGRIRRLLALADKRAN) is a DNA-binding region (H-T-H motif).

Belongs to the WhiA family.

Its function is as follows. Involved in cell division and chromosome segregation. The sequence is that of Probable cell division protein WhiA from Parafrankia sp. (strain EAN1pec).